We begin with the raw amino-acid sequence, 298 residues long: Inosose dehydratase (298 aa).

The protein belongs to the IolE/MocC family. It depends on glutathione as a cofactor. Co(2+) is required as a cofactor. Mn(2+) serves as cofactor.

The enzyme catalyses scyllo-inosose = 3D-3,5/4-trihydroxycyclohexane-1,2-dione + H2O. It functions in the pathway polyol metabolism; myo-inositol degradation into acetyl-CoA; acetyl-CoA from myo-inositol: step 2/7. Its function is as follows. Catalyzes the dehydration of inosose (2-keto-myo-inositol, 2KMI or 2,4,6/3,5-pentahydroxycyclohexanone) to 3D-(3,5/4)-trihydroxycyclohexane-1,2-dione (D-2,3-diketo-4-deoxy-epi-inositol). The protein is Inosose dehydratase of Bacillus velezensis (strain DSM 23117 / BGSC 10A6 / LMG 26770 / FZB42) (Bacillus amyloliquefaciens subsp. plantarum).